The primary structure comprises 320 residues: tRNA U34 carboxymethyltransferase (320 aa).

Carboxy-S-adenosyl-L-methionine-binding positions include Lys-89, Trp-103, Lys-108, Gly-128, 150-152 (DPT), 179-180 (IE), Met-194, Tyr-198, and Arg-313.

It belongs to the class I-like SAM-binding methyltransferase superfamily. CmoB family. Homotetramer.

The catalysed reaction is carboxy-S-adenosyl-L-methionine + 5-hydroxyuridine(34) in tRNA = 5-carboxymethoxyuridine(34) in tRNA + S-adenosyl-L-homocysteine + H(+). Its function is as follows. Catalyzes carboxymethyl transfer from carboxy-S-adenosyl-L-methionine (Cx-SAM) to 5-hydroxyuridine (ho5U) to form 5-carboxymethoxyuridine (cmo5U) at position 34 in tRNAs. This chain is tRNA U34 carboxymethyltransferase, found in Actinobacillus pleuropneumoniae serotype 7 (strain AP76).